The primary structure comprises 361 residues: MGIINAEKLKAIESAMSHIEKQFGKGSVMKLGDHNISNMDAISTGCLDLDIALGIGGVPKGRIIEIYGPESSGKTTIALHIAAESQKKGGAVGYIDAEHALDPSYAQKLGVDVDSLIISQPDTGEQGLEIAEALVRSGAIDVLVVDSVAALVPKAEIEGEMGDSHIGLQARLMSQALRKLAGTINKTNCVAIFINQLREKVGVMFGSPETTTGGRALKFYASVRLDIRRIDSIKQGDSIIGNRTRIKVMKNKVAPPFKQAEFDIMYNEGISRCGNIVDVGVKEEIVQKSGAWFSYGDIRLGQGRENAKLYLKENPEVALDIENQIREKYNLPPAELFKAAAPEGAKENISAKDDVAVDTKE.

68 to 75 (GPESSGKT) is an ATP binding site. Residues 342 to 361 (PEGAKENISAKDDVAVDTKE) are disordered. A compositionally biased stretch (basic and acidic residues) spans 344 to 361 (GAKENISAKDDVAVDTKE).

This sequence belongs to the RecA family.

The protein resides in the cytoplasm. Its function is as follows. Can catalyze the hydrolysis of ATP in the presence of single-stranded DNA, the ATP-dependent uptake of single-stranded DNA by duplex DNA, and the ATP-dependent hybridization of homologous single-stranded DNAs. It interacts with LexA causing its activation and leading to its autocatalytic cleavage. The chain is Protein RecA from Clostridium beijerinckii (strain ATCC 51743 / NCIMB 8052) (Clostridium acetobutylicum).